Reading from the N-terminus, the 69-residue chain is uncharacterized protein (69 aa).

This is an uncharacterized protein from Vaccinia virus (strain Western Reserve) (VACV).